We begin with the raw amino-acid sequence, 541 residues long: Thioredoxin reductase (541 aa).

Residues 51–52 (PG), 71–74 (DYVK), 87–88 (TC), 92–96 (GCVPK), A161, D357, and 364–366 (ELA) each bind FAD. Residues C88 and C93 are joined by a disulfide bond. Residues 438 to 452 (HRQKHIRAQKDEYDL) are loop important for the interaction with TRX1. H509 is an FAD binding site. H509 (proton acceptor) is an active-site residue. C535 and C540 form a disulfide bridge.

This sequence belongs to the class-I pyridine nucleotide-disulfide oxidoreductase family. As to quaternary structure, homodimer. Requires FAD as cofactor.

It localises to the cytoplasm. The enzyme catalyses [thioredoxin]-dithiol + NADP(+) = [thioredoxin]-disulfide + NADPH + H(+). In terms of biological role, catalyzes the transfer of electrons from NADPH to thioredoxins TRX1, TRX2 and TRX3, which in turn act as reductants of disulfide containing proteins. Able to reduce nitroglutathione (GSNO), a compound involved in the transport of nitric oxide (NO); however, TRX1 is more efficient in reducing GSNO. Has no catalytic activity towards oxidized glutathione (GSSG). The chain is Thioredoxin reductase from Plasmodium falciparum (isolate FCH-5).